The primary structure comprises 264 residues: Glucosamine-6-phosphate deaminase (264 aa).

Aspartate 72 functions as the Proton acceptor; for enolization step in the catalytic mechanism. Aspartate 141 serves as the catalytic For ring-opening step. Histidine 143 functions as the Proton acceptor; for ring-opening step in the catalytic mechanism. The active-site For ring-opening step is the glutamate 148.

This sequence belongs to the glucosamine/galactosamine-6-phosphate isomerase family. NagB subfamily. In terms of assembly, homohexamer.

The catalysed reaction is alpha-D-glucosamine 6-phosphate + H2O = beta-D-fructose 6-phosphate + NH4(+). Its pathway is amino-sugar metabolism; N-acetylneuraminate degradation; D-fructose 6-phosphate from N-acetylneuraminate: step 5/5. With respect to regulation, allosterically activated by N-acetylglucosamine 6-phosphate (GlcNAc6P). Its function is as follows. Catalyzes the reversible isomerization-deamination of glucosamine 6-phosphate (GlcN6P) to form fructose 6-phosphate (Fru6P) and ammonium ion. This is Glucosamine-6-phosphate deaminase from Glaesserella parasuis serovar 5 (strain SH0165) (Haemophilus parasuis).